The following is a 563-amino-acid chain: Heat shock 70 kDa protein 8 (563 aa).

The tract at residues 1 to 25 is disordered; it reads MAEAAYTVASDSENTGEEKSSSSPS. Position 2 is an N-acetylalanine (A2).

The protein belongs to the heat shock protein 70 (TC 1.A.33) family. DnaK subfamily.

In cooperation with other chaperones, Hsp70s are key components that facilitate folding of de novo synthesized proteins, assist translocation of precursor proteins into organelles, and are responsible for degradation of damaged protein under stress conditions. In Arabidopsis thaliana (Mouse-ear cress), this protein is Heat shock 70 kDa protein 8 (HSP70-8).